We begin with the raw amino-acid sequence, 469 residues long: GTPase Der (469 aa).

2 consecutive EngA-type G domains span residues 3–167 (PTVA…PDEV) and 175–348 (PKFA…RAAM). Residues 9–16 (GRPNVGKS), 56–60 (DTGGF), 119–122 (NKAE), 181–188 (GRPNVGKS), 228–232 (DTAGV), and 293–296 (NKWD) each bind GTP. A KH-like domain is found at 349-433 (SKLATPKLTR…PLRVQYKSSE (85 aa)). Residues 429–469 (YKSSENPFDNDEKDKPRAKPKPMSKMRGREKEVRYGKNSKK) form a disordered region.

Belongs to the TRAFAC class TrmE-Era-EngA-EngB-Septin-like GTPase superfamily. EngA (Der) GTPase family. As to quaternary structure, associates with the 50S ribosomal subunit.

Its function is as follows. GTPase that plays an essential role in the late steps of ribosome biogenesis. The sequence is that of GTPase Der from Chromobacterium violaceum (strain ATCC 12472 / DSM 30191 / JCM 1249 / CCUG 213 / NBRC 12614 / NCIMB 9131 / NCTC 9757 / MK).